Reading from the N-terminus, the 619-residue chain is Probable ATP-dependent RNA helicase DDX59 (619 aa).

The segment at 1–101 (MFVPRSLKIK…KSFSKTQRWP (101 aa)) is disordered. The span at 12 to 27 (SSNDDLKSGEAKKSKP) shows a compositional bias: basic and acidic residues. Residue lysine 26 forms a Glycyl lysine isopeptide (Lys-Gly) (interchain with G-Cter in SUMO2) linkage. The segment covering 59 to 76 (ASSTNSPSCQLAEVSSTG) has biased composition (polar residues). Residue serine 64 is modified to Phosphoserine. Positions 79–91 (EGVKDSHPSEEPV) are enriched in basic and acidic residues. The HIT-type zinc-finger motif lies at 104-133 (GEPVCVVCGRYGEYICDKTDEDVCSLECKA). Serine 160 carries the post-translational modification Phosphoserine. The Q motif signature appears at 203 to 231 (IDFEHCGFPETLNQNLKKSGYEVPTPIQM). One can recognise a Helicase ATP-binding domain in the interval 234–405 (IPVGLLGRDI…DQLLHNPVRI (172 aa)). 247-254 (ADTGSGKT) lines the ATP pocket. A DEAD box motif is present at residues 353 to 356 (DEAD). The 164-residue stretch at 416–579 (SVRQIILWVE…ILPPQLLNSP (164 aa)) folds into the Helicase C-terminal domain. Over residues 583 to 594 (EQKRKEQQKDRQ) the composition is skewed to basic and acidic residues. Positions 583-603 (EQKRKEQQKDRQTQNSLVTGA) are disordered.

The protein belongs to the DEAD box helicase family. DDX59 subfamily. Interacts (via HIT-type zinc finger) with the RUVBL1/RUVBL2 complex in the presence of ADP.

It localises to the cytoplasm. The protein resides in the nucleus. The catalysed reaction is ATP + H2O = ADP + phosphate + H(+). The chain is Probable ATP-dependent RNA helicase DDX59 (Ddx59) from Mus musculus (Mouse).